The primary structure comprises 238 residues: Urease accessory protein UreF (238 aa).

This sequence belongs to the UreF family. As to quaternary structure, ureD, UreF and UreG form a complex that acts as a GTP-hydrolysis-dependent molecular chaperone, activating the urease apoprotein by helping to assemble the nickel containing metallocenter of UreC. The UreE protein probably delivers the nickel.

It localises to the cytoplasm. Required for maturation of urease via the functional incorporation of the urease nickel metallocenter. The polypeptide is Urease accessory protein UreF (Delftia acidovorans (strain DSM 14801 / SPH-1)).